Reading from the N-terminus, the 577-residue chain is Pentatricopeptide repeat-containing protein At1g63400 (577 aa).

PPR repeat units follow at residues glycine 49 to proline 83, serine 84 to histidine 118, asparagine 119 to proline 153, serine 154 to proline 188, aspartate 189 to proline 223, asparagine 224 to alanine 258, asparagine 259 to proline 293, asparagine 294 to proline 328, asparagine 329 to proline 363, aspartate 364 to proline 398, asparagine 399 to glycine 433, asparagine 434 to proline 468, asparagine 469 to proline 503, threonine 504 to proline 538, and aspartate 539 to proline 573.

This sequence belongs to the PPR family. P subfamily.

This is Pentatricopeptide repeat-containing protein At1g63400 from Arabidopsis thaliana (Mouse-ear cress).